The following is a 210-amino-acid chain: Leucyl/phenylalanyl-tRNA--protein transferase (210 aa).

Belongs to the L/F-transferase family.

The protein resides in the cytoplasm. It catalyses the reaction N-terminal L-lysyl-[protein] + L-leucyl-tRNA(Leu) = N-terminal L-leucyl-L-lysyl-[protein] + tRNA(Leu) + H(+). It carries out the reaction N-terminal L-arginyl-[protein] + L-leucyl-tRNA(Leu) = N-terminal L-leucyl-L-arginyl-[protein] + tRNA(Leu) + H(+). The catalysed reaction is L-phenylalanyl-tRNA(Phe) + an N-terminal L-alpha-aminoacyl-[protein] = an N-terminal L-phenylalanyl-L-alpha-aminoacyl-[protein] + tRNA(Phe). Its function is as follows. Functions in the N-end rule pathway of protein degradation where it conjugates Leu, Phe and, less efficiently, Met from aminoacyl-tRNAs to the N-termini of proteins containing an N-terminal arginine or lysine. The sequence is that of Leucyl/phenylalanyl-tRNA--protein transferase from Ruegeria pomeroyi (strain ATCC 700808 / DSM 15171 / DSS-3) (Silicibacter pomeroyi).